A 105-amino-acid polypeptide reads, in one-letter code: Large ribosomal subunit protein uL24 (105 aa).

This sequence belongs to the universal ribosomal protein uL24 family. In terms of assembly, part of the 50S ribosomal subunit.

Its function is as follows. One of two assembly initiator proteins, it binds directly to the 5'-end of the 23S rRNA, where it nucleates assembly of the 50S subunit. Functionally, one of the proteins that surrounds the polypeptide exit tunnel on the outside of the subunit. This Francisella tularensis subsp. tularensis (strain FSC 198) protein is Large ribosomal subunit protein uL24.